A 451-amino-acid polypeptide reads, in one-letter code: F-box only protein 47 (451 aa).

Positions leucine 41 to leucine 91 constitute an F-box domain.

In terms of assembly, part of a SCF (SKP1-cullin-F-box) protein ligase complex.

Its function is as follows. Probably recognizes and binds to some phosphorylated proteins and promotes their ubiquitination and degradation. The protein is F-box only protein 47 (Fbxo47) of Mus musculus (Mouse).